A 468-amino-acid chain; its full sequence is Secretogranin-3 (468 aa).

An N-terminal signal peptide occupies residues 1-19; that stretch reads MGFLGTGTWILVLVLPIQA. Residues 23–69 form a disordered region; the sequence is PGGSQDKSLHNRELSAERPLNEQIAEAEEDKIKKTYPPENKPGQSNY. Residues 29–42 are compositionally biased toward basic and acidic residues; it reads KSLHNRELSAERPL. Residue serine 37 is modified to Phosphoserine. An O-linked (Xyl...) (chondroitin sulfate) serine glycan is attached at serine 37. Threonine 216 and threonine 231 each carry an O-linked (GalNAc...) threonine glycan. A disordered region spans residues 353 to 406; the sequence is KLFPAPSEKSHEETDSTKEEAAKMEKEYGSLKDSTKDDNSNPGGKTDEPKGKTE. Serine 359 carries an O-linked (GalNAc...) serine glycan. Residues 360-406 show a composition bias toward basic and acidic residues; that stretch reads EKSHEETDSTKEEAAKMEKEYGSLKDSTKDDNSNPGGKTDEPKGKTE. Serine 362 carries the post-translational modification Phosphoserine.

Interacts with CHGA. Interacts with secretogranin II/SCG2. Interacts (via C-terminus) with CPE. O-glycosylated. As to expression, detected in urine (at protein level). Expressed in brain, heart, kidney, liver and skeletal muscle.

It is found in the cytoplasmic vesicle. The protein localises to the secretory vesicle. Its subcellular location is the secretory vesicle membrane. It localises to the secreted. Member of the granin protein family that regulates the biogenesis of secretory granules. Acts as a sorting receptor for intragranular proteins including chromogranin A/CHGA. May also play a role in angiogenesis. Promotes endothelial proliferation, migration and tube formation through MEK/ERK signaling pathway. This chain is Secretogranin-3 (SCG3), found in Homo sapiens (Human).